The chain runs to 335 residues: Phosphate acyltransferase (335 aa).

It belongs to the PlsX family. Homodimer. Probably interacts with PlsY.

Its subcellular location is the cytoplasm. It catalyses the reaction a fatty acyl-[ACP] + phosphate = an acyl phosphate + holo-[ACP]. It participates in lipid metabolism; phospholipid metabolism. In terms of biological role, catalyzes the reversible formation of acyl-phosphate (acyl-PO(4)) from acyl-[acyl-carrier-protein] (acyl-ACP). This enzyme utilizes acyl-ACP as fatty acyl donor, but not acyl-CoA. This is Phosphate acyltransferase from Leptospira interrogans serogroup Icterohaemorrhagiae serovar copenhageni (strain Fiocruz L1-130).